We begin with the raw amino-acid sequence, 196 residues long: ATP-dependent Clp protease proteolytic subunit (196 aa).

The active-site Nucleophile is the Ser-101. His-126 is an active-site residue.

This sequence belongs to the peptidase S14 family. As to quaternary structure, component of the chloroplastic Clp protease core complex.

The protein resides in the plastid. It localises to the chloroplast stroma. It carries out the reaction Hydrolysis of proteins to small peptides in the presence of ATP and magnesium. alpha-casein is the usual test substrate. In the absence of ATP, only oligopeptides shorter than five residues are hydrolyzed (such as succinyl-Leu-Tyr-|-NHMec, and Leu-Tyr-Leu-|-Tyr-Trp, in which cleavage of the -Tyr-|-Leu- and -Tyr-|-Trp bonds also occurs).. Functionally, cleaves peptides in various proteins in a process that requires ATP hydrolysis. Has a chymotrypsin-like activity. Plays a major role in the degradation of misfolded proteins. This is ATP-dependent Clp protease proteolytic subunit from Morus indica (Mulberry).